Here is a 199-residue protein sequence, read N- to C-terminus: Holliday junction resolvase RecU (199 aa).

4 residues coordinate Mg(2+): T82, D84, E97, and Q116.

This sequence belongs to the RecU family. It depends on Mg(2+) as a cofactor.

The protein localises to the cytoplasm. It catalyses the reaction Endonucleolytic cleavage at a junction such as a reciprocal single-stranded crossover between two homologous DNA duplexes (Holliday junction).. Functionally, endonuclease that resolves Holliday junction intermediates in genetic recombination. Cleaves mobile four-strand junctions by introducing symmetrical nicks in paired strands. Promotes annealing of linear ssDNA with homologous dsDNA. Required for DNA repair, homologous recombination and chromosome segregation. The protein is Holliday junction resolvase RecU of Streptococcus pyogenes serotype M1.